We begin with the raw amino-acid sequence, 362 residues long: Chorismate synthase (362 aa).

NADP(+) contacts are provided by arginine 48 and arginine 54. FMN contacts are provided by residues 125–127, 238–239, glycine 286, 301–305, and arginine 327; these read RSS, NA, and KPTSS.

This sequence belongs to the chorismate synthase family. Homotetramer. The cofactor is FMNH2.

The enzyme catalyses 5-O-(1-carboxyvinyl)-3-phosphoshikimate = chorismate + phosphate. Its pathway is metabolic intermediate biosynthesis; chorismate biosynthesis; chorismate from D-erythrose 4-phosphate and phosphoenolpyruvate: step 7/7. Its function is as follows. Catalyzes the anti-1,4-elimination of the C-3 phosphate and the C-6 proR hydrogen from 5-enolpyruvylshikimate-3-phosphate (EPSP) to yield chorismate, which is the branch point compound that serves as the starting substrate for the three terminal pathways of aromatic amino acid biosynthesis. This reaction introduces a second double bond into the aromatic ring system. This is Chorismate synthase from Granulibacter bethesdensis (strain ATCC BAA-1260 / CGDNIH1).